The chain runs to 183 residues: Ribosome-recycling factor (183 aa).

The protein belongs to the RRF family.

The protein resides in the cytoplasm. Its function is as follows. Responsible for the release of ribosomes from messenger RNA at the termination of protein biosynthesis. May increase the efficiency of translation by recycling ribosomes from one round of translation to another. This is Ribosome-recycling factor from Clostridium tetani (strain Massachusetts / E88).